Consider the following 155-residue polypeptide: Large ribosomal subunit protein uL22c (155 aa).

The protein belongs to the universal ribosomal protein uL22 family. Part of the 50S ribosomal subunit.

Its subcellular location is the plastid. It is found in the chloroplast. Functionally, this protein binds specifically to 23S rRNA. In terms of biological role, the globular domain of the protein is located near the polypeptide exit tunnel on the outside of the subunit, while an extended beta-hairpin is found that lines the wall of the exit tunnel in the center of the 70S ribosome. The sequence is that of Large ribosomal subunit protein uL22c (rpl22) from Solanum bulbocastanum (Wild potato).